We begin with the raw amino-acid sequence, 132 residues long: Acyl-CoA thioester hydrolase YciA (132 aa).

One can recognise a HotDog ACOT-type domain in the interval P8 to E123.

It belongs to the acyl coenzyme A hydrolase family.

Catalyzes the hydrolysis of the thioester bond in palmitoyl-CoA and malonyl-CoA. This is Acyl-CoA thioester hydrolase YciA (yciA) from Escherichia coli O6:H1 (strain CFT073 / ATCC 700928 / UPEC).